The primary structure comprises 292 residues: uncharacterized protein (292 aa).

A disordered region spans residues 1–213; the sequence is MTTAITPDKK…DQDDDDQKDL (213 aa). Basic residues-rich tracts occupy residues 27 to 43 and 50 to 78; these read TKPR…KSKK and AKKR…KKAP. Residues 90 to 100 show a composition bias toward polar residues; sequence QQAQASLQKPI. Positions 116–134 are enriched in pro residues; that stretch reads PRPPTPIPPTGVKPEPAPR. Positions 143–158 are enriched in low complexity; that stretch reads SVSSTTPRTSATTGTT.

This is an uncharacterized protein from Caenorhabditis elegans.